Reading from the N-terminus, the 852-residue chain is Taste receptor type 1 member 3 (852 aa).

A signal peptide spans 1–20 (MLGPAVLGLSLWALLQPGAG). Residues 21 to 570 (APLCLSQQLR…FLAWGEPAVL (550 aa)) are Extracellular-facing. N85, N130, N264, N285, N380, N411, N432, and N475 each carry an N-linked (GlcNAc...) asparagine glycan. The chain crosses the membrane as a helical span at residues 571–591 (LLLLLLSLALGLVLAALGLFV). Over 592-603 (HHRDSPLVQASG) the chain is Cytoplasmic. A helical membrane pass occupies residues 604–624 (GPLACFGLVCLGLVCLSVLLF). Residues 625–639 (PGQPSPAQCLAQQPL) are Extracellular-facing. Residues 640–660 (SHLPLTGCLSTLFLQAAEIFV) traverse the membrane as a helical segment. Topologically, residues 661–682 (ESELPLSWADRLSGCLRGPWAW) are cytoplasmic. A helical membrane pass occupies residues 683–703 (LVVLLAMLVEVALCTWYLVAF). Residues 704-729 (PPEVVTDWHMLPTEALVHCRTRSWVS) are Extracellular-facing. Residues 730 to 750 (FGLAHATNATLAFLCFLGTFL) form a helical membrane-spanning segment. Residues 751 to 762 (VRSQPGRYNRAR) are Cytoplasmic-facing. The helical transmembrane segment at 763 to 783 (GLTFAMLAYFITWVSFVPLLA) threads the bilayer. The Extracellular portion of the chain corresponds to 784 to 791 (NVQVVLRP). The helical transmembrane segment at 792-812 (AVQMGALLLCVLGILAAFHLP) threads the bilayer. Topologically, residues 813-852 (RCYLLIRQPGLNTPEFFLGGGPGDAQGRNDGDTGNQGKHE) are cytoplasmic. Positions 833 to 852 (GPGDAQGRNDGDTGNQGKHE) are disordered. Positions 839–852 (GRNDGDTGNQGKHE) are enriched in basic and acidic residues.

This sequence belongs to the G-protein coupled receptor 3 family. TAS1R subfamily. In terms of assembly, forms homodimers or heterodimers with TAS1R1 and TAS1R2.

It localises to the cell membrane. In terms of biological role, putative taste receptor. TAS1R1/TAS1R3 responds to the umami taste stimulus (the taste of monosodium glutamate). TAS1R2/TAS1R3 recognizes diverse natural and synthetic sweeteners. TAS1R3 is essential for the recognition and response to the disaccharide trehalose. Sequence differences within and between species can significantly influence the selectivity and specificity of taste responses. The sequence is that of Taste receptor type 1 member 3 (TAS1R3) from Gorilla gorilla gorilla (Western lowland gorilla).